We begin with the raw amino-acid sequence, 518 residues long: MKKLKINYLFIGILALLLAVALWPSIPWFGKADNRIAAIQARGELRVSTIHTPLTYNEINGKPFGLDYELAKQFADYLGVKLKVTVRQNISQLFDDLDNGNADLLAAGLVYNSERVKNYQPGPTYYSVSQQLVYKVGQYRPRTLGNLTAEQLTVAPGHVVVNDLQTLKDTKFPELSWKVDDKKGSAELMEDVIEGKLDYTIADSVAISLFQRVHPELAVALDITDEQPVTWFSPLDGDNTLSAALLDFFNEMNEDGTLARIEEKYLGHGDDFDYVDTRTFLRAVDAVLPQLKPLFEKYAEEIDWRLLAAIAYQESHWDAQATSPTGVRGMMMLTKNTAQSLGITDRTDAEQSISGGVRYLQDMMSKVPESVPENERIWFALAAYNMGYAHMLDARALTAKTKGNPDSWADVKQRLPLLSQKPYYSKLTYGYARGHEAYAYVENIRKYQISLVGYLQEKEKQATEAAMQLAQDYPAVSPTELGKEKFPFLSFLSQSSSNYLTHSPSLLFSRKGSEEKQN.

Residues 1-21 (MKKLKINYLFIGILALLLAVA) form the signal peptide. The segment at 22-269 (LWPSIPWFGK…RIEEKYLGHG (248 aa)) is non-LT domain. Residues 270–518 (DDFDYVDTRT…SRKGSEEKQN (249 aa)) form an LT domain region. E314 is an active-site residue.

In the N-terminal section; belongs to the bacterial solute-binding protein 3 family. The protein in the C-terminal section; belongs to the transglycosylase Slt family.

The protein localises to the cell outer membrane. The enzyme catalyses Exolytic cleavage of the (1-&gt;4)-beta-glycosidic linkage between N-acetylmuramic acid (MurNAc) and N-acetylglucosamine (GlcNAc) residues in peptidoglycan, from either the reducing or the non-reducing ends of the peptidoglycan chains, with concomitant formation of a 1,6-anhydrobond in the MurNAc residue.. Murein-degrading enzyme that degrades murein glycan strands and insoluble, high-molecular weight murein sacculi, with the concomitant formation of a 1,6-anhydromuramoyl product. Lytic transglycosylases (LTs) play an integral role in the metabolism of the peptidoglycan (PG) sacculus. Their lytic action creates space within the PG sacculus to allow for its expansion as well as for the insertion of various structures such as secretion systems and flagella. The sequence is that of Membrane-bound lytic murein transglycosylase F from Escherichia coli O6:K15:H31 (strain 536 / UPEC).